A 1407-amino-acid polypeptide reads, in one-letter code: Trichohyalin (1407 aa).

An S-100-like region spans residues 1–91 (MSPLLKSIID…AQAAYYALGQ (91 aa)). EF-hand domains follow at residues 23–48 (CDGAVLKKKDLKILLDREFGAVLQRP) and 49–84 (HDPETVDVMLELLDRDSDGLVGFDEFCLLIFKLAQA). The Ca(2+) site is built by Asp32, Asp62, Asp64, Asp66, and Glu73. Disordered regions lie at residues 148–172 (EEEEQRKKRERFEQHYSRQYRDKEQ), 218–237 (LREEEQQRRERREQHERALQ), 362–471 (REQA…EEEQ), 486–587 (EQLQ…ERER), 1014–1033 (REEERLRRQERDRKFREEER), 1062–1082 (KEEKQLRRQERDRKFREEEQQ), and 1313–1407 (EQFA…QYRP). Basic and acidic residues-rich tracts occupy residues 362–381 (REQARERGESLTRRWQRQLE), 396–424 (RRQEEQSLRQDQERRQRQERERELEEQAR), 447–471 (SLRERQLRAEERQEQEQRFREEEEQ), and 554–587 (QREKRRQEREREYREEEKLQREEDEKRRRQERER). Over residues 1313-1376 (EQFAREEKSR…FREDQSRRQV (64 aa)) the composition is skewed to basic and acidic residues.

This sequence belongs to the S100-fused protein family. In terms of assembly, homodimer. Substrate of transglutaminase. Some 200 arginines are probably converted to citrullines by peptidylarginine deimidase. Found in the hard keratinizing tissues such as the inner root sheath (IRS) of hair follicles and medulla, and in the filiform papillae of dorsal tongue epithelium.

Its function is as follows. Intermediate filament-associated protein that associates in regular arrays with keratin intermediate filaments (KIF) of the inner root sheath cells of the hair follicle and the granular layer of the epidermis. It later becomes cross-linked to KIF by isodipeptide bonds. It may serve as scaffold protein, together with involucrin, in the organization of the cell envelope or even anchor the cell envelope to the KIF network. It may be involved in its own calcium-dependent postsynthetic processing during terminal differentiation. This chain is Trichohyalin (TCHH), found in Oryctolagus cuniculus (Rabbit).